A 331-amino-acid chain; its full sequence is Beta-hexosaminidase (331 aa).

Substrate contacts are provided by residues D60, R68, R133, and 163–164; that span reads KH. H176 (proton donor/acceptor) is an active-site residue. Residue D247 is the Nucleophile of the active site.

Belongs to the glycosyl hydrolase 3 family. NagZ subfamily.

It is found in the cytoplasm. It catalyses the reaction Hydrolysis of terminal non-reducing N-acetyl-D-hexosamine residues in N-acetyl-beta-D-hexosaminides.. Its pathway is cell wall biogenesis; peptidoglycan recycling. Its function is as follows. Plays a role in peptidoglycan recycling by cleaving the terminal beta-1,4-linked N-acetylglucosamine (GlcNAc) from peptide-linked peptidoglycan fragments, giving rise to free GlcNAc, anhydro-N-acetylmuramic acid and anhydro-N-acetylmuramic acid-linked peptides. This chain is Beta-hexosaminidase, found in Xanthomonas campestris pv. campestris (strain B100).